Reading from the N-terminus, the 427-residue chain is Enolase (427 aa).

Glutamine 162 is a binding site for (2R)-2-phosphoglycerate. Catalysis depends on glutamate 204, which acts as the Proton donor. Mg(2+) contacts are provided by aspartate 241, glutamate 282, and aspartate 309. (2R)-2-phosphoglycerate contacts are provided by lysine 334, arginine 363, serine 364, and lysine 385. Lysine 334 (proton acceptor) is an active-site residue.

Belongs to the enolase family. It depends on Mg(2+) as a cofactor.

It is found in the cytoplasm. Its subcellular location is the secreted. The protein localises to the cell surface. The enzyme catalyses (2R)-2-phosphoglycerate = phosphoenolpyruvate + H2O. The protein operates within carbohydrate degradation; glycolysis; pyruvate from D-glyceraldehyde 3-phosphate: step 4/5. In terms of biological role, catalyzes the reversible conversion of 2-phosphoglycerate (2-PG) into phosphoenolpyruvate (PEP). It is essential for the degradation of carbohydrates via glycolysis. The sequence is that of Enolase from Frankia casuarinae (strain DSM 45818 / CECT 9043 / HFP020203 / CcI3).